The following is a 426-amino-acid chain: Glutamate-1-semialdehyde 2,1-aminomutase (426 aa).

An N6-(pyridoxal phosphate)lysine modification is found at lysine 264.

Belongs to the class-III pyridoxal-phosphate-dependent aminotransferase family. HemL subfamily. The cofactor is pyridoxal 5'-phosphate.

The protein localises to the cytoplasm. It carries out the reaction (S)-4-amino-5-oxopentanoate = 5-aminolevulinate. The protein operates within porphyrin-containing compound metabolism; protoporphyrin-IX biosynthesis; 5-aminolevulinate from L-glutamyl-tRNA(Glu): step 2/2. The sequence is that of Glutamate-1-semialdehyde 2,1-aminomutase from Methanocella arvoryzae (strain DSM 22066 / NBRC 105507 / MRE50).